A 352-amino-acid chain; its full sequence is uncharacterized protein (352 aa).

The N-terminal 55 residues, 1–55 (MAMAALTSSSSAITLLNKPFLPNRSSFFSSDSQSPLLRFSASTSVRSRFPSAAIS), are a transit peptide targeting the chloroplast.

Belongs to the methyltransferase superfamily.

It is found in the plastid. The protein localises to the chloroplast. The protein resides in the plastoglobule. This is an uncharacterized protein from Arabidopsis thaliana (Mouse-ear cress).